Consider the following 367-residue polypeptide: 2-aminoethylphosphonate--pyruvate transaminase (367 aa).

N6-(pyridoxal phosphate)lysine is present on Lys194.

It belongs to the class-V pyridoxal-phosphate-dependent aminotransferase family. PhnW subfamily. Homodimer. Pyridoxal 5'-phosphate is required as a cofactor.

The enzyme catalyses (2-aminoethyl)phosphonate + pyruvate = phosphonoacetaldehyde + L-alanine. In terms of biological role, involved in phosphonate degradation. The sequence is that of 2-aminoethylphosphonate--pyruvate transaminase from Salmonella paratyphi B (strain ATCC BAA-1250 / SPB7).